We begin with the raw amino-acid sequence, 319 residues long: Ferrochelatase (319 aa).

Fe cation is bound by residues histidine 193 and glutamate 274.

Belongs to the ferrochelatase family.

It is found in the cytoplasm. It carries out the reaction heme b + 2 H(+) = protoporphyrin IX + Fe(2+). Its pathway is porphyrin-containing compound metabolism; protoheme biosynthesis; protoheme from protoporphyrin-IX: step 1/1. Its function is as follows. Catalyzes the ferrous insertion into protoporphyrin IX. The chain is Ferrochelatase from Actinobacillus pleuropneumoniae serotype 3 (strain JL03).